Consider the following 287-residue polypeptide: Aquaporin PIP2-1 (287 aa).

M1 is subject to N-acetylmethionine. The Cytoplasmic portion of the chain corresponds to 2-39; sequence AKDVEAVPGEGFQTRDYQDPPPAPFIDGAELKKWSFYR. K3 is modified (N6,N6-dimethyllysine; partial). The helical transmembrane segment at 40–60 threads the bilayer; sequence AVIAEFVATLLFLYITVLTVI. Over 61–83 the chain is Extracellular; it reads GYKIQSDTDAGGVDCGGVGILGI. A helical membrane pass occupies residues 84–104; the sequence is AWAFGGMIFILVYCTAGISGG. Residues 105–125 lie on the Cytoplasmic side of the membrane; the sequence is HINPAVTFGLFLARKVSLPRA. The NPA 1 motif lies at 107–109; that stretch reads NPA. Residues 126-146 form a helical membrane-spanning segment; the sequence is LLYIIAQCLGAICGVGFVKAF. Residues 147–167 are Extracellular-facing; it reads QSSYYTRYGGGANSLADGYST. Residues 168 to 188 form a helical membrane-spanning segment; it reads GTGLAAEIIGTFVLVYTVFSA. Topologically, residues 189-201 are cytoplasmic; sequence TDPKRSARDSHVP. The chain crosses the membrane as a helical span at residues 202-222; it reads VLAPLPIGFAVFMVHLATIPI. The Extracellular segment spans residues 223 to 249; the sequence is TGTGINPARSFGAAVIYNKSKPWDDHW. Residues 228–230 carry the NPA 2 motif; the sequence is NPA. The chain crosses the membrane as a helical span at residues 250-270; it reads IFWVGPFIGAAIAAFYHQFVL. Residues 271–287 are Cytoplasmic-facing; that stretch reads RASGSKSLGSFRSAANV. Phosphoserine is present on residues S280 and S283.

It belongs to the MIP/aquaporin (TC 1.A.8) family. PIP (TC 1.A.8.11) subfamily. In terms of processing, ubiquitinated by RMA1, leading to proteasomal degradation. The phosphorylation at Ser-280 and Ser-283 is altered by salt (NaCl) and hydrogen peroxide H(2)O(2) treatments. Phosphorylation of Ser-283 is required for plasma membrane targeting. In terms of tissue distribution, predominantly expressed in roots and green siliques. Also expressed at lower level above ground and in flower buds.

It localises to the cell membrane. Its function is as follows. Water channel required to facilitate the transport of water across cell membrane. Probably involved in root water uptake. Its function is impaired by Hg(2+). This is Aquaporin PIP2-1 (PIP2-1) from Arabidopsis thaliana (Mouse-ear cress).